The primary structure comprises 28 residues: M-poneritoxin-Dq4a (28 aa).

A28 carries the post-translational modification Alanine amide.

Expressed by the venom gland.

Its subcellular location is the secreted. The synthetic peptide has weak antimicrobial activity against Gram-negative bacterium E.coli ATCC 10536. It does not show antimicrobial activity against the Gram-positive bacteria B.amyloliquefacies S499, L.monocytogenes 2231 and S.aureus ATCC 29213, against the Gram-negative bacteria P.putida BTP1 and P.aeruginosa PaO1, or against the fungi S.cerevisiae, R.mucilaginosa, C.cucumerinum, F.oxysporum and B.cinerea. In Dinoponera quadriceps (South American ant), this protein is M-poneritoxin-Dq4a.